Consider the following 280-residue polypeptide: Vacuolar protein sorting-associated protein 71 (280 aa).

A compositionally biased stretch (polar residues) spans 64-73 (RSEGDGNSIS). The interval 64 to 92 (RSEGDGNSISRQDDRNSKNSHSFEERYTQ) is disordered. Residues 74 to 92 (RQDDRNSKNSHSFEERYTQ) show a composition bias toward basic and acidic residues. Zn(2+) contacts are provided by Cys244, Cys247, Cys256, Cys259, Cys264, Cys268, His272, and Cys277. The HIT-type zinc finger occupies 244 to 277 (CSICGGYDSISSCVNCGNKICSVSCFKLHNETRC).

Belongs to the SWR1 complex at least composed of ACT1, ARP4, RVB1, RVB2, ARP6, YAF9, VPS71, VPS72, SWC3, SWC4, SWC5, SWR1 and HTZ1.

The protein localises to the nucleus. Functionally, participates in the catalytic exchange of histone H2A for the H2A variant HZT1, an euchromatin-specific factor, leading to chromatin remodeling and changes in transcription of targeted genes. Indirectly involved in vacuolar protein sorting. This is Vacuolar protein sorting-associated protein 71 (VPS71) from Saccharomyces cerevisiae (strain ATCC 204508 / S288c) (Baker's yeast).